The following is a 658-amino-acid chain: UvrABC system protein B (658 aa).

Positions Lys25–Ile414 constitute a Helicase ATP-binding domain. Gly38–Thr45 is a binding site for ATP. The Beta-hairpin signature appears at His91–Ile114. In terms of domain architecture, Helicase C-terminal spans Gln433–Arg607. In terms of domain architecture, UVR spans Glu623–Leu658.

It belongs to the UvrB family. Forms a heterotetramer with UvrA during the search for lesions. Interacts with UvrC in an incision complex.

The protein resides in the cytoplasm. In terms of biological role, the UvrABC repair system catalyzes the recognition and processing of DNA lesions. A damage recognition complex composed of 2 UvrA and 2 UvrB subunits scans DNA for abnormalities. Upon binding of the UvrA(2)B(2) complex to a putative damaged site, the DNA wraps around one UvrB monomer. DNA wrap is dependent on ATP binding by UvrB and probably causes local melting of the DNA helix, facilitating insertion of UvrB beta-hairpin between the DNA strands. Then UvrB probes one DNA strand for the presence of a lesion. If a lesion is found the UvrA subunits dissociate and the UvrB-DNA preincision complex is formed. This complex is subsequently bound by UvrC and the second UvrB is released. If no lesion is found, the DNA wraps around the other UvrB subunit that will check the other stand for damage. The protein is UvrABC system protein B of Helicobacter pylori (strain ATCC 700392 / 26695) (Campylobacter pylori).